The chain runs to 115 residues: Pancreatic progenitor cell differentiation and proliferation factor (115 aa).

Position 9 is a phosphoserine (S9). Disordered regions lie at residues 21–46 and 73–115; these read LGSS…SPGL and ESPE…RDLS. Residues 22–32 are compositionally biased toward low complexity; that stretch reads GSSSSSSSGGS. Over residues 106-115 the composition is skewed to polar residues; it reads SGQTNPRDLS.

This sequence belongs to the PPDPF family.

Its function is as follows. Probable regulator of exocrine pancreas development. The chain is Pancreatic progenitor cell differentiation and proliferation factor (Ppdpf) from Mus musculus (Mouse).